Consider the following 720-residue polypeptide: Collectin-12 (720 aa).

The Cytoplasmic segment spans residues 1 to 37 (MKDDFNDEEEVQSFGYKRFGIQEGNECTKCKNDWALR). The helical; Signal-anchor for type II membrane protein transmembrane segment at 38–58 (VAIALLYVLCALLTIAVAVLG) threads the bilayer. The Extracellular segment spans residues 59–720 (YKVVQRMDNV…RTNESKVPVL (662 aa)). Coiled-coil stretches lie at residues 95–120 (EKSENATSELHSFKLEFQTLQKQLSD), 216–267 (ISSL…LAAN), and 377–408 (LHGLNNSVAETRAESTELKAQQEELAVRLDKE). The segment at 433–576 (FTILQGPPGP…GPPGLPGLPA (144 aa)) is disordered. Collagen-like domains lie at 444-503 (GPRG…PGPK) and 510-569 (GRQG…PGPP). Residues 460–479 (PKGEKGEKGAPGDAGPKGEK) show a composition bias toward basic and acidic residues. A compositionally biased stretch (low complexity) spans 488-503 (PGLKGPPGSRGSPGPK). Residues 504 to 513 (GSRGSGGRQG) show a composition bias toward gly residues. A compositionally biased stretch (low complexity) spans 527–560 (PGRDGQPGPTGPQGPQGLRGPAGPAGLEGARGPV). Positions 562 to 576 (PIGPPGPPGLPGLPA) are enriched in pro residues. Cystine bridges form between Cys604–Cys615, Cys634–Cys709, and Cys687–Cys701. The C-type lectin domain occupies 611 to 710 (FREQCYHFSA…CTERIGFICE (100 aa)). Ile643, Asn645, and Glu649 together coordinate Ca(2+). Lys670, Gln673, and Asp675 together coordinate a carbohydrate. The Ca(2+) site is built by Gln673, Asp675, Asn676, Glu685, Asp686, Asn697, Asp698, and Glu710. Glu685 contributes to the a carbohydrate binding site. 2 residues coordinate a carbohydrate: Asn697 and Asp698.

It localises to the membrane. Functionally, scavenger receptor that displays several functions associated with host defense. Binds to carbohydrates. The polypeptide is Collectin-12 (colec12) (Danio rerio (Zebrafish)).